We begin with the raw amino-acid sequence, 912 residues long: Phosphoenolpyruvate carboxylase (912 aa).

Residues His138 and Lys575 contribute to the active site.

It belongs to the PEPCase type 1 family. The cofactor is Mg(2+).

The enzyme catalyses oxaloacetate + phosphate = phosphoenolpyruvate + hydrogencarbonate. Forms oxaloacetate, a four-carbon dicarboxylic acid source for the tricarboxylic acid cycle. The polypeptide is Phosphoenolpyruvate carboxylase (Lactobacillus acidophilus (strain ATCC 700396 / NCK56 / N2 / NCFM)).